Reading from the N-terminus, the 547-residue chain is Chaperonin GroEL (547 aa).

ATP-binding positions include 30-33 (TLGP), Lys51, 87-91 (DGTTT), Gly415, and Asp496.

Belongs to the chaperonin (HSP60) family. In terms of assembly, forms a cylinder of 14 subunits composed of two heptameric rings stacked back-to-back. Interacts with the co-chaperonin GroES.

It localises to the cytoplasm. It catalyses the reaction ATP + H2O + a folded polypeptide = ADP + phosphate + an unfolded polypeptide.. Its function is as follows. Together with its co-chaperonin GroES, plays an essential role in assisting protein folding. The GroEL-GroES system forms a nano-cage that allows encapsulation of the non-native substrate proteins and provides a physical environment optimized to promote and accelerate protein folding. The chain is Chaperonin GroEL from Mannheimia succiniciproducens (strain KCTC 0769BP / MBEL55E).